The sequence spans 257 residues: UPF0246 protein swp_3736 (257 aa).

This sequence belongs to the UPF0246 family.

In Shewanella piezotolerans (strain WP3 / JCM 13877), this protein is UPF0246 protein swp_3736.